Consider the following 461-residue polypeptide: Carboxypeptidase Rv3627c (461 aa).

A signal peptide spans 1–28 (MGPTRWRKSTHVVVGAAVLAFVAVVVAA). Ser-114 functions as the Acyl-ester intermediate in the catalytic mechanism. The active-site Proton acceptor is the Lys-117. Ser-295 is an active-site residue.

The protein belongs to the peptidase S13 family.

Functionally, carboxypeptidase that cleaves terminal D-alanine from peptidoglycan in the mycobacterial cell wall. May cleave L-Lys-D-Ala and/or D-Ala-D-Ala peptide bonds. Exerts important effects on mycobacterial cell morphology and cell division. The sequence is that of Carboxypeptidase Rv3627c from Mycobacterium tuberculosis (strain ATCC 25618 / H37Rv).